A 146-amino-acid chain; its full sequence is Large ribosomal subunit protein uL15 (146 aa).

Positions 1 to 57 (MKLFELQPAPGSKKLPKRKGRGHGTGNGKTAGRGHKGQNARSGGGVRPGFEGGQMPL) are disordered. A compositionally biased stretch (gly residues) spans 42–52 (SGGGVRPGFEG).

The protein belongs to the universal ribosomal protein uL15 family. As to quaternary structure, part of the 50S ribosomal subunit.

Binds to the 23S rRNA. The polypeptide is Large ribosomal subunit protein uL15 (Acetivibrio thermocellus (strain ATCC 27405 / DSM 1237 / JCM 9322 / NBRC 103400 / NCIMB 10682 / NRRL B-4536 / VPI 7372) (Clostridium thermocellum)).